The following is a 148-amino-acid chain: Small ribosomal subunit protein eS6 (148 aa).

The protein belongs to the eukaryotic ribosomal protein eS6 family.

The sequence is that of Small ribosomal subunit protein eS6 from Pyrobaculum neutrophilum (strain DSM 2338 / JCM 9278 / NBRC 100436 / V24Sta) (Thermoproteus neutrophilus).